Here is a 186-residue protein sequence, read N- to C-terminus: DNA-directed RNA polymerase 22 kDa subunit (186 aa).

It belongs to the poxviridae DNA-directed RNA polymerase 22 kDa subunit family. As to quaternary structure, the DNA-dependent RNA polymerase used for intermediate and late genes expression consists of eight subunits Rpo30/OPG66, Rpo7/OPG90, Rpo22/OPG103, Rpo147/OPG105, Rpo18/OPG119, Rpo19/OPG131, Rpo132/OPG151 and Rpo35/OPG156. The same holoenzyme, with the addition of the transcription-specificity factor OPG109, is used for early gene expression.

It is found in the virion. The enzyme catalyses RNA(n) + a ribonucleoside 5'-triphosphate = RNA(n+1) + diphosphate. Functionally, part of the DNA-dependent RNA polymerase which catalyzes the transcription of viral DNA into RNA using the four ribonucleoside triphosphates as substrates. Responsible for the transcription of early, intermediate and late genes. DNA-dependent RNA polymerase associates with the early transcription factor (ETF), itself composed of OPG118 and OPG133, thereby allowing the early genes transcription. Late transcription, and probably also intermediate transcription, require newly synthesized RNA polymerase. In Vertebrata (FPV), this protein is DNA-directed RNA polymerase 22 kDa subunit (OPG103).